The primary structure comprises 278 residues: Ribosomal RNA small subunit methyltransferase A (278 aa).

S-adenosyl-L-methionine-binding residues include Asn27, Leu29, Gly54, Glu75, Asp95, and Asn118.

The protein belongs to the class I-like SAM-binding methyltransferase superfamily. rRNA adenine N(6)-methyltransferase family. RsmA subfamily.

Its subcellular location is the cytoplasm. The catalysed reaction is adenosine(1518)/adenosine(1519) in 16S rRNA + 4 S-adenosyl-L-methionine = N(6)-dimethyladenosine(1518)/N(6)-dimethyladenosine(1519) in 16S rRNA + 4 S-adenosyl-L-homocysteine + 4 H(+). Functionally, specifically dimethylates two adjacent adenosines (A1518 and A1519) in the loop of a conserved hairpin near the 3'-end of 16S rRNA in the 30S particle. May play a critical role in biogenesis of 30S subunits. The polypeptide is Ribosomal RNA small subunit methyltransferase A (Chlamydia abortus (strain DSM 27085 / S26/3) (Chlamydophila abortus)).